Reading from the N-terminus, the 186-residue chain is Ribosome maturation factor RimM (186 aa).

Positions 93-166 constitute a PRC barrel domain; that stretch reads PDEYYDHQLM…RAVIDPPPGL (74 aa). The segment at 160 to 186 is disordered; sequence IDPPPGLIDDRAEVDSSDTEAATEADA. Positions 174–186 are enriched in acidic residues; that stretch reads DSSDTEAATEADA.

The protein belongs to the RimM family. In terms of assembly, binds ribosomal protein uS19.

The protein localises to the cytoplasm. Its function is as follows. An accessory protein needed during the final step in the assembly of 30S ribosomal subunit, possibly for assembly of the head region. Essential for efficient processing of 16S rRNA. May be needed both before and after RbfA during the maturation of 16S rRNA. It has affinity for free ribosomal 30S subunits but not for 70S ribosomes. This chain is Ribosome maturation factor RimM, found in Streptomyces avermitilis (strain ATCC 31267 / DSM 46492 / JCM 5070 / NBRC 14893 / NCIMB 12804 / NRRL 8165 / MA-4680).